We begin with the raw amino-acid sequence, 115 residues long: Small ribosomal subunit protein bS6 (115 aa).

This sequence belongs to the bacterial ribosomal protein bS6 family.

In terms of biological role, binds together with bS18 to 16S ribosomal RNA. This chain is Small ribosomal subunit protein bS6, found in Syntrophotalea carbinolica (strain DSM 2380 / NBRC 103641 / GraBd1) (Pelobacter carbinolicus).